Here is a 361-residue protein sequence, read N- to C-terminus: tRNA/tmRNA (uracil-C(5))-methyltransferase (361 aa).

S-adenosyl-L-methionine contacts are provided by Gln185, Tyr213, Asn218, Glu234, and Asp294. Cys319 functions as the Nucleophile in the catalytic mechanism. Residue Glu353 is the Proton acceptor of the active site.

This sequence belongs to the class I-like SAM-binding methyltransferase superfamily. RNA M5U methyltransferase family. TrmA subfamily.

The enzyme catalyses uridine(54) in tRNA + S-adenosyl-L-methionine = 5-methyluridine(54) in tRNA + S-adenosyl-L-homocysteine + H(+). It carries out the reaction uridine(341) in tmRNA + S-adenosyl-L-methionine = 5-methyluridine(341) in tmRNA + S-adenosyl-L-homocysteine + H(+). Functionally, dual-specificity methyltransferase that catalyzes the formation of 5-methyluridine at position 54 (m5U54) in all tRNAs, and that of position 341 (m5U341) in tmRNA (transfer-mRNA). The sequence is that of tRNA/tmRNA (uracil-C(5))-methyltransferase from Pseudomonas putida (strain ATCC 47054 / DSM 6125 / CFBP 8728 / NCIMB 11950 / KT2440).